A 779-amino-acid chain; its full sequence is uncharacterized protein (779 aa).

Phosphoserine occurs at positions 97 and 120. A compositionally biased stretch (basic and acidic residues) spans 125–135; that stretch reads EIDGEDEKKSV. Residues 125 to 174 form a disordered region; that stretch reads EIDGEDEKKSVGQESITGSAKRKDRRSKTNGSKRQKAEANREPPSDISLS. Basic residues predominate over residues 144 to 158; that stretch reads AKRKDRRSKTNGSKR. Positions 159-168 are enriched in basic and acidic residues; it reads QKAEANREPP. Residues 215–222 and 533–540 contribute to the ATP site; these read GPPGCGKT. Positions 759-779 are disordered; it reads DRQKYQRLAKRWSSASTNDAD.

Belongs to the AAA ATPase family.

Its subcellular location is the nucleus. This is an uncharacterized protein from Schizosaccharomyces pombe (strain 972 / ATCC 24843) (Fission yeast).